A 2274-amino-acid chain; its full sequence is Adenomatous polyposis coli protein 2 (2274 aa).

Residues 5 to 59 (MASYEQLVRQVEALKAENTHLRQELRDNSSHLSKLETETSGMKEVLKHLQGKLEQ) adopt a coiled-coil conformation. Disordered stretches follow at residues 97-120 (GPEP…KDSF) and 248-269 (VEEE…QPGN). ARM repeat units follow at residues 301–341 (PESC…GAKD), 472–511 (ANKA…NLSW), 515–555 (INSK…NLSA), 557–602 (STEN…NVSS), 608–647 (EDYR…NLSA), and 650–689 (PRDQ…NLLA). Residues 832 to 856 (AAKAKAKLALAVARIDRLVEDISAL) are a coiled coil. Disordered stretches follow at residues 859–901 (SSDD…GSRA), 1061–1143 (CSSL…NCVQ), and 1165–1216 (SIAS…TSQF). Residues 861–870 (DDSFSLSSGD) are compositionally biased toward low complexity. The stretch at 1049 to 1068 (LVAQDGPMSLSRCSSLSSLS) is repeat 1. Positions 1049–1565 (LVAQDGPMSL…SLTSSASSLS (517 aa)) are 5 X 20 AA approximate repeat of F-X-V-E-X-T-P-X-C-F-S-R-X-S-S-L-S-S-L-S. Residues 1049 to 1565 (LVAQDGPMSL…SLTSSASSLS (517 aa)) are interaction with CTNNB1. Polar residues predominate over residues 1077 to 1086 (QAENLDSDSS). Low complexity predominate over residues 1092–1103 (EAGPGEAELGRA). A compositionally biased stretch (polar residues) spans 1133–1143 (TPSSSSENCVQ). Residues 1140–1159 (NCVQETPLVLSRCSSVSSLG) form repeat 2. Repeat 3 spans residues 1250–1269 (FTVEKPDENFSCASSLSALA). Disordered stretches follow at residues 1290–1323 (ERAV…SATD), 1368–1480 (RGDD…LQSL), 1493–1631 (FYDS…DIRP), 1699–2003 (STLQ…RGRP), 2022–2122 (PRQP…IKDE), and 2135–2274 (TALP…SLLE). The segment covering 1374-1397 (TDSAEGTPVNFSSAASLSDETLQG) has biased composition (polar residues). Repeat 4 spans residues 1375–1394 (DSAEGTPVNFSSAASLSDET). A compositionally biased stretch (basic and acidic residues) spans 1399 to 1411 (SRDKPAGPGDRQK). Positions 1455–1470 (RPQSARSNRDSSCQTR) are enriched in polar residues. The segment covering 1517–1529 (LKREKPAGRKETP) has biased composition (basic and acidic residues). Repeat unit 5 spans residues 1546-1565 (LIVDETPPCYSLTSSASSLS). Positions 1556 to 1574 (SLTSSASSLSEPEAPEQPA) are enriched in low complexity. A phosphoserine mark is found at Ser1563 and Ser1565. Basic residues predominate over residues 1608–1624 (PRRRTQVPGSRRRKPRA). Composition is skewed to low complexity over residues 1780–1795 (SGPC…SGTT) and 1839–1868 (LAKT…TPTG). Residues 1792–1871 (SGTTQPETVT…PLATPTGGPL (80 aa)) are required for localization to microtubules and function in microtubule stabilization. Phosphoserine is present on Ser1861. Pro residues predominate over residues 1910-1921 (RVPPPLARPSPE). Low complexity-rich tracts occupy residues 1945–1955 (RMASARSSGSE) and 1983–1997 (LSSA…QAAS). Residues 2037-2114 (GLAPLAPRRT…PLPRVAPPGT (78 aa)) form an interaction with MAPRE1 and MAPRE3 region. The span at 2165–2179 (DVATSKTNSSTSPSL) shows a compositional bias: polar residues.

It belongs to the adenomatous polyposis coli (APC) family. As to quaternary structure, interacts with PSRC1. Interacts with MAPRE3. Interacts with APC, CTNNB1, TP53BP2, MAPRE1 and possibly with AXIN2. Expressed in brain and other neural tissues.

It is found in the cytoplasm. Its subcellular location is the cytoskeleton. It localises to the golgi apparatus. The protein localises to the perinuclear region. Stabilizes microtubules and may regulate actin fiber dynamics through the activation of Rho family GTPases. May also function in Wnt signaling by promoting the rapid degradation of CTNNB1. The chain is Adenomatous polyposis coli protein 2 (Apc2) from Mus musculus (Mouse).